Consider the following 171-residue polypeptide: MQWSYRFVSGLLVLASIVGMTFALYLEHFKGLEPCPLCIFQRVGLMAMGIVALIAFLHNPVSNAFKRVYAFLATLGILWSVGVAIRHVWLQTLPPDQVPSCGPGLNYLLDALPLKTVLQQVLQGSGECAAIHWTFLGQSLPVWSLAYFSLILLVCVWQLLRRYPVIVTKKK.

Residues 1-8 are Cytoplasmic-facing; it reads MQWSYRFV. The chain crosses the membrane as a helical span at residues 9–25; the sequence is SGLLVLASIVGMTFALY. Residues 26-43 lie on the Periplasmic side of the membrane; the sequence is LEHFKGLEPCPLCIFQRV. An intrachain disulfide couples C35 to C38. A helical membrane pass occupies residues 44 to 60; that stretch reads GLMAMGIVALIAFLHNP. At 61 to 67 the chain is on the cytoplasmic side; the sequence is VSNAFKR. The helical transmembrane segment at 68–85 threads the bilayer; the sequence is VYAFLATLGILWSVGVAI. Over 86-142 the chain is Periplasmic; it reads RHVWLQTLPPDQVPSCGPGLNYLLDALPLKTVLQQVLQGSGECAAIHWTFLGQSLPV. A disulfide bridge connects residues C101 and C128. The chain crosses the membrane as a helical span at residues 143–161; that stretch reads WSLAYFSLILLVCVWQLLR. The Cytoplasmic segment spans residues 162–171; that stretch reads RYPVIVTKKK.

Belongs to the DsbB family.

The protein resides in the cell inner membrane. In terms of biological role, required for disulfide bond formation in some periplasmic proteins. Acts by oxidizing the DsbA protein. The sequence is that of Disulfide bond formation protein B from Acinetobacter baylyi (strain ATCC 33305 / BD413 / ADP1).